Here is a 299-residue protein sequence, read N- to C-terminus: Coenzyme PQQ synthesis protein B (299 aa).

This sequence belongs to the PqqB family.

Its pathway is cofactor biosynthesis; pyrroloquinoline quinone biosynthesis. Functionally, may be involved in the transport of PQQ or its precursor to the periplasm. In Methylorubrum extorquens (strain CM4 / NCIMB 13688) (Methylobacterium extorquens), this protein is Coenzyme PQQ synthesis protein B.